The primary structure comprises 681 residues: Chaperone protein htpG (681 aa).

An a; substrate-binding region spans residues 1–326 (MQKGNIGVTT…SPDIPLNVSR (326 aa)). Positions 327 to 545 (SYLQSDSNVK…YMRRMKEMAN (219 aa)) are b. Positions 546–681 (IQAGMSFYGE…NFVKRSIELI (136 aa)) are c.

Belongs to the heat shock protein 90 family. Homodimer.

Its subcellular location is the cytoplasm. In terms of biological role, molecular chaperone. Has ATPase activity. The protein is Chaperone protein htpG of Bacteroides fragilis (strain YCH46).